We begin with the raw amino-acid sequence, 306 residues long: Pyridoxal 5'-phosphate synthase subunit PdxS (306 aa).

Residue aspartate 36 coordinates D-ribose 5-phosphate. The active-site Schiff-base intermediate with D-ribose 5-phosphate is the lysine 93. Residue glycine 165 coordinates D-ribose 5-phosphate. Arginine 177 contacts D-glyceraldehyde 3-phosphate. Residues glycine 226 and 247–248 (GS) contribute to the D-ribose 5-phosphate site.

Belongs to the PdxS/SNZ family. In the presence of PdxT, forms a dodecamer of heterodimers.

It carries out the reaction aldehydo-D-ribose 5-phosphate + D-glyceraldehyde 3-phosphate + L-glutamine = pyridoxal 5'-phosphate + L-glutamate + phosphate + 3 H2O + H(+). Its pathway is cofactor biosynthesis; pyridoxal 5'-phosphate biosynthesis. Functionally, catalyzes the formation of pyridoxal 5'-phosphate from ribose 5-phosphate (RBP), glyceraldehyde 3-phosphate (G3P) and ammonia. The ammonia is provided by the PdxT subunit. Can also use ribulose 5-phosphate and dihydroxyacetone phosphate as substrates, resulting from enzyme-catalyzed isomerization of RBP and G3P, respectively. The polypeptide is Pyridoxal 5'-phosphate synthase subunit PdxS (Corynebacterium urealyticum (strain ATCC 43042 / DSM 7109)).